The following is a 107-amino-acid chain: MIIVTNTAKITKGNGHKLIDRFNKVGQVETMPGFLGLEVLLTQNTVDYDEVTISTRWNAKEDFQGWTKSPAFKAAHSHQGGMPDYILDNKISYYDVKVVRMPMAAAQ.

The ABM domain occupies 2-94; the sequence is IIVTNTAKIT…YILDNKISYY (93 aa). Fe cation is bound at residue Asn6. Residue His76 coordinates heme.

It belongs to the antibiotic biosynthesis monooxygenase family. Heme-degrading monooxygenase IsdG subfamily. Homodimer.

Its subcellular location is the cytoplasm. The enzyme catalyses heme b + 3 reduced [NADPH--hemoprotein reductase] + 3 O2 = biliverdin IXalpha + CO + Fe(2+) + 3 oxidized [NADPH--hemoprotein reductase] + 3 H2O + H(+). Allows bacterial pathogens to use the host heme as an iron source. Catalyzes the oxidative degradation of the heme macrocyclic porphyrin ring to the biliverdin in the presence of a suitable electron donor such as ascorbate or NADPH--cytochrome P450 reductase, with subsequent release of free iron. The protein is Heme-degrading monooxygenase of Bacillus cereus (strain AH187).